The sequence spans 153 residues: Aminoglycoside N(6')-acetyltransferase type 1 (153 aa).

One can recognise an N-acetyltransferase domain in the interval 6–153 (PTIRQATPAD…YFRMPLEPSA (148 aa)). Substrate is bound by residues tryptophan 27, tyrosine 70, glutamate 83, aspartate 119, and glutamate 140.

As to quaternary structure, homodimer.

The enzyme catalyses kanamycin B + acetyl-CoA = N(6')-acetylkanamycin B + CoA + H(+). Functionally, catalyzes the transfer of an acetyl group from acetyl-CoA to the 6'-amino group of aminoglycoside molecules conferring resistance to antibiotics containing the purpurosamine ring including amikacin, gentamicin, kanamycin B, tobramycin, netilmicin, and isepamicin. In Stenotrophomonas maltophilia (Pseudomonas maltophilia), this protein is Aminoglycoside N(6')-acetyltransferase type 1.